The chain runs to 241 residues: Translation initiation factor IF-3 (241 aa).

The span at 193-203 (AAEKARQKAIQ) shows a compositional bias: basic and acidic residues. The disordered stretch occupies residues 193–241 (AAEKARQKAIQEGRAAPAQDDTEDEEIEKLERELEEQDDEDDDEAEATE). The segment covering 212-241 (DDTEDEEIEKLERELEEQDDEDDDEAEATE) has biased composition (acidic residues).

Belongs to the IF-3 family. In terms of assembly, monomer.

Its subcellular location is the cytoplasm. IF-3 binds to the 30S ribosomal subunit and shifts the equilibrium between 70S ribosomes and their 50S and 30S subunits in favor of the free subunits, thus enhancing the availability of 30S subunits on which protein synthesis initiation begins. This chain is Translation initiation factor IF-3, found in Sorangium cellulosum (strain So ce56) (Polyangium cellulosum (strain So ce56)).